The following is a 199-amino-acid chain: MSKQNKKDWKKFKDEHKEEHKVENEILEEEIDEKSQHQEPALGHPSYTALEEQLTLAEQKAHENWEKSVRALAELDNVRRRMEREVANAHKYGVEKLISALLPVVDSLEQALQLADKNSDPSMHEGLELTMKLFLDALQKFDVEQIDPLGQTFDPQQHEAMSMQPAPGAPPNSVITVFQKGYKLSDRVIRPARVIVSTK.

A compositionally biased stretch (basic and acidic residues) spans 1–24 (MSKQNKKDWKKFKDEHKEEHKVEN). The segment at 1-47 (MSKQNKKDWKKFKDEHKEEHKVENEILEEEIDEKSQHQEPALGHPSY) is disordered.

The protein belongs to the GrpE family. As to quaternary structure, homodimer.

It is found in the cytoplasm. Functionally, participates actively in the response to hyperosmotic and heat shock by preventing the aggregation of stress-denatured proteins, in association with DnaK and GrpE. It is the nucleotide exchange factor for DnaK and may function as a thermosensor. Unfolded proteins bind initially to DnaJ; upon interaction with the DnaJ-bound protein, DnaK hydrolyzes its bound ATP, resulting in the formation of a stable complex. GrpE releases ADP from DnaK; ATP binding to DnaK triggers the release of the substrate protein, thus completing the reaction cycle. Several rounds of ATP-dependent interactions between DnaJ, DnaK and GrpE are required for fully efficient folding. The chain is Protein GrpE from Legionella pneumophila (strain Paris).